Reading from the N-terminus, the 232-residue chain is Small ribosomal subunit protein uS3 (232 aa).

In terms of domain architecture, KH type-2 spans isoleucine 39–arginine 107. Residues glycine 211–lysine 232 are disordered. The span at glutamine 213 to lysine 223 shows a compositional bias: basic and acidic residues.

It belongs to the universal ribosomal protein uS3 family. In terms of assembly, part of the 30S ribosomal subunit. Forms a tight complex with proteins S10 and S14.

Its function is as follows. Binds the lower part of the 30S subunit head. Binds mRNA in the 70S ribosome, positioning it for translation. The sequence is that of Small ribosomal subunit protein uS3 from Campylobacter concisus (strain 13826).